Here is a 126-residue protein sequence, read N- to C-terminus: Fluoride-specific ion channel FluC 1 (126 aa).

4 consecutive transmembrane segments (helical) span residues 1-21 (MAGS…GAWL), 38-58 (WGTF…LALY), 67-87 (LALL…TFAV), and 99-119 (FVSL…AGVG). Residues Gly-77 and Ser-80 each contribute to the Na(+) site.

The protein belongs to the fluoride channel Fluc/FEX (TC 1.A.43) family.

Its subcellular location is the cell inner membrane. It catalyses the reaction fluoride(in) = fluoride(out). With respect to regulation, na(+) is not transported, but it plays an essential structural role and its presence is essential for fluoride channel function. Functionally, fluoride-specific ion channel. Important for reducing fluoride concentration in the cell, thus reducing its toxicity. In Synechococcus sp. (strain CC9902), this protein is Fluoride-specific ion channel FluC 1.